A 74-amino-acid chain; its full sequence is ATP synthase subunit c (74 aa).

2 consecutive transmembrane segments (helical) span residues 5–25 (LAYI…LGVG) and 49–69 (LFIG…VALL).

The protein belongs to the ATPase C chain family. As to quaternary structure, F-type ATPases have 2 components, F(1) - the catalytic core - and F(0) - the membrane proton channel. F(1) has five subunits: alpha(3), beta(3), gamma(1), delta(1), epsilon(1). F(0) has three main subunits: a(1), b(2) and c(10-14). The alpha and beta chains form an alternating ring which encloses part of the gamma chain. F(1) is attached to F(0) by a central stalk formed by the gamma and epsilon chains, while a peripheral stalk is formed by the delta and b chains.

Its subcellular location is the cell inner membrane. Functionally, f(1)F(0) ATP synthase produces ATP from ADP in the presence of a proton or sodium gradient. F-type ATPases consist of two structural domains, F(1) containing the extramembraneous catalytic core and F(0) containing the membrane proton channel, linked together by a central stalk and a peripheral stalk. During catalysis, ATP synthesis in the catalytic domain of F(1) is coupled via a rotary mechanism of the central stalk subunits to proton translocation. Key component of the F(0) channel; it plays a direct role in translocation across the membrane. A homomeric c-ring of between 10-14 subunits forms the central stalk rotor element with the F(1) delta and epsilon subunits. This chain is ATP synthase subunit c, found in Ruegeria sp. (strain TM1040) (Silicibacter sp.).